The sequence spans 386 residues: MLKVKRLEEISSCHSSNPLEKVAFFQCMEEVEKVKCFLEENSGDLDLQSGDNEAEENVWSNRALDERIIVKGGRTSALTDDIPAPAAPFDHRMVMAKHASVDNLYTVSKSEILGGGRFGQVHKCEEKATGLKLAAKIIKTRGAKDKEDVKNEISVMNQLDHVNLIQLYDAFESKHDIILVMDVEGGELFDRIIDENCNLTELDTILFMKQICEGIRYMHQMYILHLDLKPENILCVNRDAKQIKIIDFGLARRYKPREKLKVNFGTPEFLAPEVVNYDFVSFSTDMWSVGVITYMLLSGLSPFLGDNDAETLTNILACRWDLEDEEFQDISEEAKEFISKLLIKEKSWRISASEALKHPWLSDHKLHSRLSAQKNCNSGVLNLTTK.

At Ser-100 the chain carries Phosphoserine. Positions 107–361 (VSKSEILGGG…ASEALKHPWL (255 aa)) constitute a Protein kinase domain. ATP-binding positions include 113–121 (LGGGRFGQV) and Lys-136. Asp-227 (proton acceptor) is an active-site residue.

Belongs to the protein kinase superfamily. CAMK Ser/Thr protein kinase family.

The catalysed reaction is L-seryl-[protein] + ATP = O-phospho-L-seryl-[protein] + ADP + H(+). It catalyses the reaction L-threonyl-[protein] + ATP = O-phospho-L-threonyl-[protein] + ADP + H(+). In Mus musculus (Mouse), this protein is Myosin light chain kinase family member 4 (Mylk4).